The primary structure comprises 61 residues: Small ribosomal subunit protein uS14 (61 aa).

Residues cysteine 24, cysteine 27, cysteine 40, and cysteine 43 each coordinate Zn(2+).

Belongs to the universal ribosomal protein uS14 family. Zinc-binding uS14 subfamily. In terms of assembly, part of the 30S ribosomal subunit. Contacts proteins S3 and S10. It depends on Zn(2+) as a cofactor.

In terms of biological role, binds 16S rRNA, required for the assembly of 30S particles and may also be responsible for determining the conformation of the 16S rRNA at the A site. In Helicobacter pylori (strain J99 / ATCC 700824) (Campylobacter pylori J99), this protein is Small ribosomal subunit protein uS14.